Reading from the N-terminus, the 188-residue chain is Protein GrpE 2 (188 aa).

Residues 1 to 29 are compositionally biased toward basic and acidic residues; that stretch reads MDNQEKKTNYQNTDKENDLEKNKEKKNDE. The tract at residues 1 to 33 is disordered; that stretch reads MDNQEKKTNYQNTDKENDLEKNKEKKNDESIFQ.

The protein belongs to the GrpE family. As to quaternary structure, homodimer.

It localises to the cytoplasm. Participates actively in the response to hyperosmotic and heat shock by preventing the aggregation of stress-denatured proteins, in association with DnaK and GrpE. It is the nucleotide exchange factor for DnaK and may function as a thermosensor. Unfolded proteins bind initially to DnaJ; upon interaction with the DnaJ-bound protein, DnaK hydrolyzes its bound ATP, resulting in the formation of a stable complex. GrpE releases ADP from DnaK; ATP binding to DnaK triggers the release of the substrate protein, thus completing the reaction cycle. Several rounds of ATP-dependent interactions between DnaJ, DnaK and GrpE are required for fully efficient folding. This Buchnera aphidicola subsp. Schizaphis graminum (strain Sg) protein is Protein GrpE 2.